Consider the following 175-residue polypeptide: uncharacterized protein (175 aa).

It to yeast YER187w.

This is an uncharacterized protein from Saccharomyces cerevisiae (strain ATCC 204508 / S288c) (Baker's yeast).